The following is a 319-amino-acid chain: Beta-ketoacyl-[acyl-carrier-protein] synthase III (319 aa).

Active-site residues include Cys-115 and His-246. The ACP-binding stretch occupies residues 247-251; sequence QANLR. Asn-276 is a catalytic residue.

It belongs to the thiolase-like superfamily. FabH family. In terms of assembly, homodimer.

It localises to the cytoplasm. The enzyme catalyses malonyl-[ACP] + acetyl-CoA + H(+) = 3-oxobutanoyl-[ACP] + CO2 + CoA. It functions in the pathway lipid metabolism; fatty acid biosynthesis. Its function is as follows. Catalyzes the condensation reaction of fatty acid synthesis by the addition to an acyl acceptor of two carbons from malonyl-ACP. Catalyzes the first condensation reaction which initiates fatty acid synthesis and may therefore play a role in governing the total rate of fatty acid production. Possesses both acetoacetyl-ACP synthase and acetyl transacylase activities. Its substrate specificity determines the biosynthesis of branched-chain and/or straight-chain of fatty acids. The polypeptide is Beta-ketoacyl-[acyl-carrier-protein] synthase III (Coxiella burnetii (strain CbuK_Q154) (Coxiella burnetii (strain Q154))).